The sequence spans 263 residues: Acetyl-coenzyme A carboxylase carboxyl transferase subunit beta (263 aa).

Positions 1 to 263 (MDCPSCKVSY…LKETPKKKKA (263 aa)) constitute a CoA carboxyltransferase N-terminal domain. Positions 3, 6, 22, and 25 each coordinate Zn(2+). A C4-type zinc finger spans residues 3-25 (CPSCKVSYDEEVFTDNLMVCPHC).

Belongs to the AccD/PCCB family. Acetyl-CoA carboxylase is a heterohexamer composed of biotin carboxyl carrier protein (AccB), biotin carboxylase (AccC) and two subunits each of ACCase subunit alpha (AccA) and ACCase subunit beta (AccD). Zn(2+) serves as cofactor.

Its subcellular location is the cytoplasm. It carries out the reaction N(6)-carboxybiotinyl-L-lysyl-[protein] + acetyl-CoA = N(6)-biotinyl-L-lysyl-[protein] + malonyl-CoA. Its pathway is lipid metabolism; malonyl-CoA biosynthesis; malonyl-CoA from acetyl-CoA: step 1/1. Its function is as follows. Component of the acetyl coenzyme A carboxylase (ACC) complex. Biotin carboxylase (BC) catalyzes the carboxylation of biotin on its carrier protein (BCCP) and then the CO(2) group is transferred by the transcarboxylase to acetyl-CoA to form malonyl-CoA. In Treponema denticola (strain ATCC 35405 / DSM 14222 / CIP 103919 / JCM 8153 / KCTC 15104), this protein is Acetyl-coenzyme A carboxylase carboxyl transferase subunit beta.